The following is a 457-amino-acid chain: Polygalacturonase-2 (457 aa).

Residues 1 to 24 form the signal peptide; sequence MVIQRNSILLLIIIFASSISTCRS. The propeptide occupies 25-71; the sequence is NVIDDNLFKQVYDNILEQEFAHDFQAYLSYLSKNIESNNNIDKVDKN. 2 N-linked (GlcNAc...) asparagine glycosylation sites follow: asparagine 189 and asparagine 240. PbH1 repeat units lie at residues 228-255 and 256-277; these read SCTN…HVSN and TQYI…SIVS. Aspartate 270 serves as the catalytic Proton donor. Residue asparagine 286 is glycosylated (N-linked (GlcNAc...) asparagine). Histidine 293 is a catalytic residue. PbH1 repeat units follow at residues 309 to 330 and 338 to 359; these read VSNV…RIKT and ASNI…IIDQ. N-linked (GlcNAc...) asparagine glycosylation occurs at asparagine 311. Positions 445-457 are excised as a propeptide; sequence LEISEDEALLYNY.

Belongs to the glycosyl hydrolase 28 family. As to quaternary structure, monomer PG2 (isoenzymes PG2A and PG2B). Also forms heterodimers called polygalacturonase 1 (PG1) with the beta subunit GP1. In terms of processing, N-glycosylated. PG2B isozyme has a greater degree of glycosylation than PG2A. Expressed only in ripening fruits (at protein level).

It localises to the secreted. The protein resides in the extracellular space. It is found in the apoplast. Its subcellular location is the cell wall. The enzyme catalyses (1,4-alpha-D-galacturonosyl)n+m + H2O = (1,4-alpha-D-galacturonosyl)n + (1,4-alpha-D-galacturonosyl)m.. Functionally, catalytic subunit of the polygalacturonase isozyme 1 and 2 (PG1 and PG2). Acts in concert with the pectinesterase, in the ripening process. Is involved in cell wall metabolism, specifically in polyuronide degradation. The depolymerization and solubilization of cell wall polyuronides mediated by PG2 during ripening seems to be limited by the beta subunit GP1, probably by recruiting PG2 to form PG1. The polypeptide is Polygalacturonase-2 (PG2) (Solanum lycopersicum (Tomato)).